The primary structure comprises 451 residues: Methylenetetrahydrofolate--tRNA-(uracil-5-)-methyltransferase TrmFO (451 aa).

9-14 (GGGMAG) is a binding site for FAD.

Belongs to the MnmG family. TrmFO subfamily. It depends on FAD as a cofactor.

The protein localises to the cytoplasm. It carries out the reaction uridine(54) in tRNA + (6R)-5,10-methylene-5,6,7,8-tetrahydrofolate + NADH + H(+) = 5-methyluridine(54) in tRNA + (6S)-5,6,7,8-tetrahydrofolate + NAD(+). It catalyses the reaction uridine(54) in tRNA + (6R)-5,10-methylene-5,6,7,8-tetrahydrofolate + NADPH + H(+) = 5-methyluridine(54) in tRNA + (6S)-5,6,7,8-tetrahydrofolate + NADP(+). In terms of biological role, catalyzes the folate-dependent formation of 5-methyl-uridine at position 54 (M-5-U54) in all tRNAs. The sequence is that of Methylenetetrahydrofolate--tRNA-(uracil-5-)-methyltransferase TrmFO from Dinoroseobacter shibae (strain DSM 16493 / NCIMB 14021 / DFL 12).